We begin with the raw amino-acid sequence, 476 residues long: Thyroid receptor-interacting protein 6 (476 aa).

A compositionally biased stretch (pro residues) spans 1–12 (MSGPTWLPPKQP). Disordered stretches follow at residues 1–93 (MSGP…PGSL) and 108–253 (NGGR…QPPE). Arg-25 carries the post-translational modification Asymmetric dimethylarginine; alternate. Arg-25 is modified (omega-N-methylarginine; alternate). The residue at position 55 (Tyr-55) is a Phosphotyrosine; by SRC. At Ser-92 the chain carries Phosphoserine. Arg-111 bears the Omega-N-methylarginine mark. The residue at position 142 (Ser-142) is a Phosphoserine. Residues 152–167 (PTPASYTTASTPAGPA) are compositionally biased toward low complexity. An omega-N-methylarginine mark is found at Arg-179 and Arg-186. A Phosphoserine modification is found at Ser-189. An omega-N-methylarginine mark is found at Arg-205, Arg-236, and Arg-238. Phosphoserine is present on Ser-249. LIM zinc-binding domains lie at 279–316 (CGGCGEDVVGDGAGVVALDRVFHVGCFVCSTCRAQLRG), 339–398 (CATC…FAPR), and 399–467 (CSVC…RIQE). An interaction with MAGI1 and PTPN13 region spans residues 469-476 (SATVTTDC).

Belongs to the zyxin/ajuba family. Specifically interacts with the ligand binding domain of the thyroid receptor (TR) in the presence of thyroid hormone. Interacts (via the third LIM domain and C-terminus) with PTPN13 (via the second PDZ domain). Interacts (via the second LIM domain or via the third LIM domain plus C-terminus) with PDLIM4 (via PDZ domain). Found in a complex with PTPN13 and PDLIM4. Interacts with SVIL isoform 2. Interacts with LPAR2 but not other LPA receptors. Interacts with PRKAA2. Interacts with MAGI1. Interacts with SCRIB. In case of infection, interacts with S.typhimurium protein sseI. Post-translationally, phosphorylation at Tyr-55 by SRC is required for enhancement of lysophosphatidic acid-induced cell migration. Tyr-55 is dephosphorylated by PTPN13. As to expression, abundantly expressed in kidney, liver and lung. Lower levels in heart, placenta and pancreas. Expressed in colonic epithelial cells. Up-regulated in colonic tumors.

The protein resides in the cytoplasm. Its subcellular location is the cytoskeleton. It localises to the cell junction. It is found in the focal adhesion. The protein localises to the nucleus. Its function is as follows. Relays signals from the cell surface to the nucleus to weaken adherens junction and promote actin cytoskeleton reorganization and cell invasiveness. Involved in lysophosphatidic acid-induced cell adhesion and migration. Acts as a transcriptional coactivator for NF-kappa-B and JUN, and mediates the transrepression of these transcription factors induced by glucocorticoid receptor. This is Thyroid receptor-interacting protein 6 (TRIP6) from Homo sapiens (Human).